Reading from the N-terminus, the 671-residue chain is DNA ligase (671 aa).

NAD(+) contacts are provided by residues 34-38 (DAEYD), 83-84 (SL), and E117. K119 acts as the N6-AMP-lysine intermediate in catalysis. Positions 140, 177, 293, and 317 each coordinate NAD(+). Zn(2+) is bound by residues C411, C414, C429, and C434. The BRCT domain occupies 591–671 (KVGGKFTGKT…EFLQMLEGEQ (81 aa)).

This sequence belongs to the NAD-dependent DNA ligase family. LigA subfamily. Mg(2+) serves as cofactor. Mn(2+) is required as a cofactor.

The catalysed reaction is NAD(+) + (deoxyribonucleotide)n-3'-hydroxyl + 5'-phospho-(deoxyribonucleotide)m = (deoxyribonucleotide)n+m + AMP + beta-nicotinamide D-nucleotide.. DNA ligase that catalyzes the formation of phosphodiester linkages between 5'-phosphoryl and 3'-hydroxyl groups in double-stranded DNA using NAD as a coenzyme and as the energy source for the reaction. It is essential for DNA replication and repair of damaged DNA. This chain is DNA ligase, found in Geobacter metallireducens (strain ATCC 53774 / DSM 7210 / GS-15).